A 368-amino-acid chain; its full sequence is tRNA-specific 2-thiouridylase MnmA (368 aa).

Residues 11-18 (GMSGGVDS) and Met-37 contribute to the ATP site. An interaction with target base in tRNA region spans residues 97-99 (NPD). The active-site Nucleophile is Cys-102. A disulfide bridge connects residues Cys-102 and Cys-199. Gly-127 lines the ATP pocket. Residues 149 to 151 (KDQ) are interaction with tRNA. Cys-199 functions as the Cysteine persulfide intermediate in the catalytic mechanism. Residues 311–312 (RY) are interaction with tRNA.

The protein belongs to the MnmA/TRMU family. In terms of assembly, interacts with TusE.

The protein resides in the cytoplasm. It catalyses the reaction S-sulfanyl-L-cysteinyl-[protein] + uridine(34) in tRNA + AH2 + ATP = 2-thiouridine(34) in tRNA + L-cysteinyl-[protein] + A + AMP + diphosphate + H(+). Functionally, catalyzes the 2-thiolation of uridine at the wobble position (U34) of tRNA(Lys), tRNA(Glu) and tRNA(Gln), leading to the formation of s(2)U34, the first step of tRNA-mnm(5)s(2)U34 synthesis. Sulfur is provided by IscS, via a sulfur-relay system. Binds ATP and its substrate tRNAs. This is tRNA-specific 2-thiouridylase MnmA from Salmonella choleraesuis (strain SC-B67).